The following is a 626-amino-acid chain: Chaperone protein HtpG (626 aa).

The segment at 1–341 is a; substrate-binding; it reads METKQFKAES…SEDLSLNISR (341 aa). The interval 342–552 is b; it reads EILQHDRQLK…EGELSIEMEK (211 aa). The disordered stretch occupies residues 490-509; sequence DLGIEGEEKENTSNSDDKEN. Residues 498–509 show a composition bias toward basic and acidic residues; the sequence is KENTSNSDDKEN. The tract at residues 553-626 is c; that stretch reads VLNAMPNNQN…FTNNICKIMK (74 aa).

This sequence belongs to the heat shock protein 90 family. As to quaternary structure, homodimer.

The protein localises to the cytoplasm. In terms of biological role, molecular chaperone. Has ATPase activity. The sequence is that of Chaperone protein HtpG from Clostridium botulinum (strain ATCC 19397 / Type A).